The primary structure comprises 276 residues: 5'-nucleotidase SurE (276 aa).

A divalent metal cation-binding residues include aspartate 14, aspartate 15, serine 46, and asparagine 104.

This sequence belongs to the SurE nucleotidase family. A divalent metal cation is required as a cofactor.

It is found in the cytoplasm. The catalysed reaction is a ribonucleoside 5'-phosphate + H2O = a ribonucleoside + phosphate. Functionally, nucleotidase that shows phosphatase activity on nucleoside 5'-monophosphates. The protein is 5'-nucleotidase SurE of Crocosphaera subtropica (strain ATCC 51142 / BH68) (Cyanothece sp. (strain ATCC 51142)).